Consider the following 738-residue polypeptide: Junction plakoglobin (738 aa).

ARM repeat units follow at residues 128–167, 168–211, 212–251, 254–293, 294–337, 338–377, 379–416, 419–460, 466–506, 508–547, 570–609, and 611–657; these read NYQD…QLSK, KEAS…LSHH, REGL…NLLL, EGAK…LLAY, GNQE…LSVC, PSNK…NLSD, ATKQ…NLTC, GRNK…HLTS, EVAQ…NLAL, PANH…QPYT, PVNR…ELAQ, and KEAA…ADYR.

This sequence belongs to the beta-catenin family. Homodimer.

Its subcellular location is the cell junction. The protein localises to the adherens junction. It localises to the desmosome. The protein resides in the cytoplasm. It is found in the cytoskeleton. Its subcellular location is the membrane. Its function is as follows. Common junctional plaque protein. The membrane-associated plaques are architectural elements in an important strategic position to influence the arrangement and function of both the cytoskeleton and the cells within the tissue. The presence of plakoglobin in both the desmosomes and in the intermediate junctions suggests that it plays a central role in the structure and function of submembranous plaques. This Xenopus laevis (African clawed frog) protein is Junction plakoglobin (jup).